We begin with the raw amino-acid sequence, 480 residues long: Protein nucleotidyltransferase YdiU (480 aa).

Positions 86, 88, 89, 109, 121, 122, 172, and 179 each coordinate ATP. D248 acts as the Proton acceptor in catalysis. Residues N249 and D258 each contribute to the Mg(2+) site. Position 258 (D258) interacts with ATP.

Belongs to the SELO family. The cofactor is Mg(2+). Mn(2+) serves as cofactor.

The catalysed reaction is L-seryl-[protein] + ATP = 3-O-(5'-adenylyl)-L-seryl-[protein] + diphosphate. It carries out the reaction L-threonyl-[protein] + ATP = 3-O-(5'-adenylyl)-L-threonyl-[protein] + diphosphate. The enzyme catalyses L-tyrosyl-[protein] + ATP = O-(5'-adenylyl)-L-tyrosyl-[protein] + diphosphate. It catalyses the reaction L-histidyl-[protein] + UTP = N(tele)-(5'-uridylyl)-L-histidyl-[protein] + diphosphate. The catalysed reaction is L-seryl-[protein] + UTP = O-(5'-uridylyl)-L-seryl-[protein] + diphosphate. It carries out the reaction L-tyrosyl-[protein] + UTP = O-(5'-uridylyl)-L-tyrosyl-[protein] + diphosphate. Its function is as follows. Nucleotidyltransferase involved in the post-translational modification of proteins. It can catalyze the addition of adenosine monophosphate (AMP) or uridine monophosphate (UMP) to a protein, resulting in modifications known as AMPylation and UMPylation. This Salmonella paratyphi B (strain ATCC BAA-1250 / SPB7) protein is Protein nucleotidyltransferase YdiU.